The primary structure comprises 120 residues: Large ribosomal subunit protein uL18 (120 aa).

The segment at 1-22 (MITKTSKNAARQKRHARVRAKL) is disordered. Basic residues predominate over residues 10 to 20 (ARQKRHARVRA).

Belongs to the universal ribosomal protein uL18 family. As to quaternary structure, part of the 50S ribosomal subunit; part of the 5S rRNA/L5/L18/L25 subcomplex. Contacts the 5S and 23S rRNAs.

This is one of the proteins that bind and probably mediate the attachment of the 5S RNA into the large ribosomal subunit, where it forms part of the central protuberance. The sequence is that of Large ribosomal subunit protein uL18 from Bacillus velezensis (strain DSM 23117 / BGSC 10A6 / LMG 26770 / FZB42) (Bacillus amyloliquefaciens subsp. plantarum).